The sequence spans 282 residues: Cell division protein FtsQ (282 aa).

Topologically, residues 1 to 30 are cytoplasmic; the sequence is MINIGPPKKRRLRRKGNRFKKTRRVIPWRR. The helical transmembrane segment at 31–51 threads the bilayer; sequence LMIGALWGTMALASLGMVVAV. At 52–282 the chain is on the periplasmic side; it reads ACFAGQMLFA…LDAGELRGKG (231 aa). In terms of domain architecture, POTRA spans 65 to 133; the sequence is FKVERIQVEN…DQLVIRVDER (69 aa).

Belongs to the FtsQ/DivIB family. FtsQ subfamily.

The protein localises to the cell inner membrane. Its function is as follows. Essential cell division protein. This Syntrophotalea carbinolica (strain DSM 2380 / NBRC 103641 / GraBd1) (Pelobacter carbinolicus) protein is Cell division protein FtsQ.